We begin with the raw amino-acid sequence, 281 residues long: Pantothenate synthetase (281 aa).

31-38 (MGALHDGH) is a binding site for ATP. The Proton donor role is filled by His-38. (R)-pantoate is bound at residue Gln-62. Gln-62 provides a ligand contact to beta-alanine. Position 148-151 (148-151 (GQKD)) interacts with ATP. (R)-pantoate is bound at residue Gln-154. ATP is bound by residues Val-177 and 185 to 188 (LSSR).

The protein belongs to the pantothenate synthetase family. Homodimer.

The protein localises to the cytoplasm. The catalysed reaction is (R)-pantoate + beta-alanine + ATP = (R)-pantothenate + AMP + diphosphate + H(+). It participates in cofactor biosynthesis; (R)-pantothenate biosynthesis; (R)-pantothenate from (R)-pantoate and beta-alanine: step 1/1. In terms of biological role, catalyzes the condensation of pantoate with beta-alanine in an ATP-dependent reaction via a pantoyl-adenylate intermediate. The protein is Pantothenate synthetase of Dinoroseobacter shibae (strain DSM 16493 / NCIMB 14021 / DFL 12).